The sequence spans 88 residues: VRQELKHELKQGYRDKLVDIREEILRKRRAGKLPGDTASTLKAWWQAHSKWPYPTEEDKARLVQETGLQLKQINNWFINQRKRNWHNN.

The ELK domain maps to 4 to 24; it reads ELKHELKQGYRDKLVDIREEI. A DNA-binding region (homeobox; TALE-type) is located at residues 25 to 88; that stretch reads LRKRRAGKLP…NQRKRNWHNN (64 aa).

The protein belongs to the TALE/KNOX homeobox family. As to expression, expressed in all tissues examined. Highest expression in leaves.

The protein resides in the nucleus. The polypeptide is Homeobox protein knotted-1-like 2 (KNOX2) (Zea mays (Maize)).